The primary structure comprises 141 residues: Ribonuclease P protein component (141 aa).

Basic and acidic residues predominate over residues 114-134; that stretch reads RRIKAKGERRGDGKRRTERPE. Residues 114–141 are disordered; the sequence is RRIKAKGERRGDGKRRTERPESGPVNGK.

It belongs to the RnpA family. Consists of a catalytic RNA component (M1 or rnpB) and a protein subunit.

The catalysed reaction is Endonucleolytic cleavage of RNA, removing 5'-extranucleotides from tRNA precursor.. In terms of biological role, RNaseP catalyzes the removal of the 5'-leader sequence from pre-tRNA to produce the mature 5'-terminus. It can also cleave other RNA substrates such as 4.5S RNA. The protein component plays an auxiliary but essential role in vivo by binding to the 5'-leader sequence and broadening the substrate specificity of the ribozyme. This Brucella anthropi (strain ATCC 49188 / DSM 6882 / CCUG 24695 / JCM 21032 / LMG 3331 / NBRC 15819 / NCTC 12168 / Alc 37) (Ochrobactrum anthropi) protein is Ribonuclease P protein component.